The chain runs to 97 residues: Co-chaperonin GroES (97 aa).

Belongs to the GroES chaperonin family. Heptamer of 7 subunits arranged in a ring. Interacts with the chaperonin GroEL.

The protein localises to the cytoplasm. Its function is as follows. Together with the chaperonin GroEL, plays an essential role in assisting protein folding. The GroEL-GroES system forms a nano-cage that allows encapsulation of the non-native substrate proteins and provides a physical environment optimized to promote and accelerate protein folding. GroES binds to the apical surface of the GroEL ring, thereby capping the opening of the GroEL channel. The protein is Co-chaperonin GroES of Tolumonas auensis (strain DSM 9187 / NBRC 110442 / TA 4).